Reading from the N-terminus, the 313-residue chain is Carbamate kinase 2 (313 aa).

This sequence belongs to the carbamate kinase family.

The protein localises to the cytoplasm. The enzyme catalyses hydrogencarbonate + NH4(+) + ATP = carbamoyl phosphate + ADP + H2O + H(+). It participates in metabolic intermediate metabolism; carbamoyl phosphate degradation; CO(2) and NH(3) from carbamoyl phosphate: step 1/1. The chain is Carbamate kinase 2 (arcC2) from Staphylococcus aureus (strain Mu50 / ATCC 700699).